A 333-amino-acid polypeptide reads, in one-letter code: uncharacterized protein (333 aa).

It belongs to the polysaccharide synthase family.

This is an uncharacterized protein from Methanocaldococcus jannaschii (strain ATCC 43067 / DSM 2661 / JAL-1 / JCM 10045 / NBRC 100440) (Methanococcus jannaschii).